The primary structure comprises 421 residues: UDP-N-acetylglucosamine 1-carboxyvinyltransferase (421 aa).

22-23 (KN) serves as a coordination point for phosphoenolpyruvate. Arg-94 provides a ligand contact to UDP-N-acetyl-alpha-D-glucosamine. Cys-118 serves as the catalytic Proton donor. Cys-118 is modified (2-(S-cysteinyl)pyruvic acid O-phosphothioketal). UDP-N-acetyl-alpha-D-glucosamine contacts are provided by residues 163–166 (KVSV), Asp-308, and Ile-330.

This sequence belongs to the EPSP synthase family. MurA subfamily.

Its subcellular location is the cytoplasm. It carries out the reaction phosphoenolpyruvate + UDP-N-acetyl-alpha-D-glucosamine = UDP-N-acetyl-3-O-(1-carboxyvinyl)-alpha-D-glucosamine + phosphate. It participates in cell wall biogenesis; peptidoglycan biosynthesis. Its function is as follows. Cell wall formation. Adds enolpyruvyl to UDP-N-acetylglucosamine. The sequence is that of UDP-N-acetylglucosamine 1-carboxyvinyltransferase from Orientia tsutsugamushi (strain Ikeda) (Rickettsia tsutsugamushi).